The chain runs to 94 residues: Small ribosomal subunit protein uS17 (94 aa).

The segment at 1 to 22 (MSEQTSAASTTDRGDRKTRRGY) is disordered.

It belongs to the universal ribosomal protein uS17 family. Part of the 30S ribosomal subunit.

Functionally, one of the primary rRNA binding proteins, it binds specifically to the 5'-end of 16S ribosomal RNA. This chain is Small ribosomal subunit protein uS17, found in Kineococcus radiotolerans (strain ATCC BAA-149 / DSM 14245 / SRS30216).